Reading from the N-terminus, the 314-residue chain is tRNA dimethylallyltransferase (314 aa).

Residue 11 to 18 (GPTAVGKT) coordinates ATP. 13 to 18 (TAVGKT) contacts substrate. The tract at residues 36-39 (DSMQ) is interaction with substrate tRNA.

The protein belongs to the IPP transferase family. In terms of assembly, monomer. It depends on Mg(2+) as a cofactor.

The enzyme catalyses adenosine(37) in tRNA + dimethylallyl diphosphate = N(6)-dimethylallyladenosine(37) in tRNA + diphosphate. In terms of biological role, catalyzes the transfer of a dimethylallyl group onto the adenine at position 37 in tRNAs that read codons beginning with uridine, leading to the formation of N6-(dimethylallyl)adenosine (i(6)A). This chain is tRNA dimethylallyltransferase, found in Bacillus anthracis.